The primary structure comprises 199 residues: Phosphoheptose isomerase (199 aa).

An SIS domain is found at 36 to 198; the sequence is MSQCLLNEHK…DRKLIPSSED (163 aa). 51-53 serves as a coordination point for substrate; sequence NGG. Zn(2+) contacts are provided by His60 and Glu64. Substrate is bound by residues Glu64, 93–94, 119–121, Ser124, and Gln174; these read ND and STS. 2 residues coordinate Zn(2+): Gln174 and His182.

It belongs to the SIS family. GmhA subfamily. Homotetramer. Zn(2+) is required as a cofactor.

The protein resides in the cytoplasm. It catalyses the reaction 2 D-sedoheptulose 7-phosphate = D-glycero-alpha-D-manno-heptose 7-phosphate + D-glycero-beta-D-manno-heptose 7-phosphate. It functions in the pathway carbohydrate biosynthesis; D-glycero-D-manno-heptose 7-phosphate biosynthesis; D-glycero-alpha-D-manno-heptose 7-phosphate and D-glycero-beta-D-manno-heptose 7-phosphate from sedoheptulose 7-phosphate: step 1/1. In terms of biological role, catalyzes the isomerization of sedoheptulose 7-phosphate in D-glycero-D-manno-heptose 7-phosphate. This chain is Phosphoheptose isomerase, found in Coxiella burnetii (strain RSA 331 / Henzerling II).